The following is a 206-amino-acid chain: Large ribosomal subunit protein uL4 (206 aa).

The segment at 45–78 (QGNRAQKDREQVKHTTKKPWRQKGTGRARAGMSS) is disordered. Over residues 58-70 (HTTKKPWRQKGTG) the composition is skewed to basic residues.

Belongs to the universal ribosomal protein uL4 family. Part of the 50S ribosomal subunit.

One of the primary rRNA binding proteins, this protein initially binds near the 5'-end of the 23S rRNA. It is important during the early stages of 50S assembly. It makes multiple contacts with different domains of the 23S rRNA in the assembled 50S subunit and ribosome. Functionally, forms part of the polypeptide exit tunnel. This chain is Large ribosomal subunit protein uL4, found in Burkholderia ambifaria (strain MC40-6).